The sequence spans 146 residues: Holo-[acyl-carrier-protein] synthase (146 aa).

Mg(2+)-binding residues include Asp-8 and Glu-61.

The protein belongs to the P-Pant transferase superfamily. AcpS family. It depends on Mg(2+) as a cofactor.

The protein localises to the cytoplasm. The catalysed reaction is apo-[ACP] + CoA = holo-[ACP] + adenosine 3',5'-bisphosphate + H(+). Transfers the 4'-phosphopantetheine moiety from coenzyme A to a Ser of acyl-carrier-protein. The polypeptide is Holo-[acyl-carrier-protein] synthase (Rhodopseudomonas palustris (strain ATCC BAA-98 / CGA009)).